Here is a 79-residue protein sequence, read N- to C-terminus: MSNVTIYATDWCPYCRSLLKGLDGQEYDLIDVDQDEEAGEWVKSVNDGNRIVPTVRYSDGTHATNPLAAEVIAKIEALA.

The region spanning 1–79 (MSNVTIYATD…EVIAKIEALA (79 aa)) is the Glutaredoxin domain.

This sequence belongs to the glutaredoxin family.

The protein resides in the cytoplasm. The catalysed reaction is [mycoredoxin]-L-cysteine + arseno-mycothiol + H(+) = [mycoredoxin]-S-mycothiol-L-cysteine + arsenite. Involved in defense against toxic arsenate. Involved in the mycothiol/myoredoxin redox pathway which uses a mycothioltransferase mechanism; functions as a monothiol mixed disulfide reductase and is recycled by a second mycothiol forming mycothione which in turn is reduced in a NADPH-dependent manner. This Corynebacterium glutamicum (strain ATCC 13032 / K051) protein is Mycoredoxin 1 (mrx1).